The primary structure comprises 110 residues: Large ribosomal subunit protein uL22 (110 aa).

It belongs to the universal ribosomal protein uL22 family. As to quaternary structure, part of the 50S ribosomal subunit.

In terms of biological role, this protein binds specifically to 23S rRNA; its binding is stimulated by other ribosomal proteins, e.g. L4, L17, and L20. It is important during the early stages of 50S assembly. It makes multiple contacts with different domains of the 23S rRNA in the assembled 50S subunit and ribosome. The globular domain of the protein is located near the polypeptide exit tunnel on the outside of the subunit, while an extended beta-hairpin is found that lines the wall of the exit tunnel in the center of the 70S ribosome. The sequence is that of Large ribosomal subunit protein uL22 from Histophilus somni (strain 129Pt) (Haemophilus somnus).